The chain runs to 95 residues: Aspartyl/glutamyl-tRNA(Asn/Gln) amidotransferase subunit C (95 aa).

It belongs to the GatC family. Heterotrimer of A, B and C subunits.

It carries out the reaction L-glutamyl-tRNA(Gln) + L-glutamine + ATP + H2O = L-glutaminyl-tRNA(Gln) + L-glutamate + ADP + phosphate + H(+). The catalysed reaction is L-aspartyl-tRNA(Asn) + L-glutamine + ATP + H2O = L-asparaginyl-tRNA(Asn) + L-glutamate + ADP + phosphate + 2 H(+). Functionally, allows the formation of correctly charged Asn-tRNA(Asn) or Gln-tRNA(Gln) through the transamidation of misacylated Asp-tRNA(Asn) or Glu-tRNA(Gln) in organisms which lack either or both of asparaginyl-tRNA or glutaminyl-tRNA synthetases. The reaction takes place in the presence of glutamine and ATP through an activated phospho-Asp-tRNA(Asn) or phospho-Glu-tRNA(Gln). The chain is Aspartyl/glutamyl-tRNA(Asn/Gln) amidotransferase subunit C from Clostridium botulinum (strain ATCC 19397 / Type A).